Reading from the N-terminus, the 754-residue chain is ATP-dependent RNA helicase DRS1 (754 aa).

2 disordered regions span residues 1–61 (MVVG…NLDE) and 119–227 (GLVK…GDEA). Residues 19 to 34 (DSEDDVPILDSSDDEK) are compositionally biased toward acidic residues. Residues 40-51 (TTKKRKGKNNKK) are compositionally biased toward basic residues. The span at 124 to 142 (AHIDSKQEEETEKEKVEKE) shows a compositional bias: basic and acidic residues. 2 stretches are compositionally biased toward acidic residues: residues 167–193 (NQSE…QEEM) and 202–211 (DEIDEEDDSE). The residue at position 210 (Ser210) is a Phosphoserine. The Q motif motif lies at 233-261 (ENFNSLSLSRPVLKGLASLGYVKPSPIQS). Residues 264–439 (IPIALLGKDI…SLSLKKPVRI (176 aa)) enclose the Helicase ATP-binding domain. Residue 277 to 284 (AVTGSGKT) participates in ATP binding. A DEAD box motif is present at residues 387–390 (DEAD). Positions 450–641 (KLTQEFVRIR…SMNDTIEDIL (192 aa)) constitute a Helicase C-terminal domain. Residues 623–669 (IEETNKLVESMNDTIEDILVEEKEEKEILRAEMQLRKGENMLKHKKE) adopt a coiled-coil conformation. The segment at 675-754 (RRTWFQSESD…NKKKGFKSRR (80 aa)) is disordered. Residues 696 to 707 (RNKKVTNSKKRK) are compositionally biased toward basic residues. Residues 724–736 (TKTDRIADQERTF) show a composition bias toward basic and acidic residues. Positions 737-754 (KKQKSTNSNKKKGFKSRR) are enriched in basic residues.

Belongs to the DEAD box helicase family. DDX27/DRS1 subfamily. As to quaternary structure, interacts with RRP1 and associates with pre-ribosomal particles.

The protein localises to the nucleus. It localises to the nucleolus. The catalysed reaction is ATP + H2O = ADP + phosphate + H(+). In terms of biological role, ATP-binding RNA helicase involved in ribosome assembly. This chain is ATP-dependent RNA helicase DRS1 (DRS1), found in Saccharomyces cerevisiae (strain YJM789) (Baker's yeast).